A 264-amino-acid polypeptide reads, in one-letter code: Apolipoprotein A-I (264 aa).

The signal sequence occupies residues 1–18; that stretch reads MRVVVVTLALLFLTGTQA. Repeat copies occupy residues 67-88 and 89-110. A 10 X approximate tandem repeats region spans residues 67 to 264; the sequence is LKLADNLDTL…LLDELQKTVA (198 aa). A 3; half-length repeat occupies 111-121; that stretch reads KDLEEVKEKIR. Tandem repeats lie at residues 122-143, 144-165, 166-187, 188-209, and 210-231. The 9; half-length repeat unit spans residues 232–242; it reads PLVQDFKERLT. Copy 10 of the repeat occupies 243-264; it reads PYAENLKTRFISLLDELQKTVA.

It belongs to the apolipoprotein A1/A4/E family. In terms of tissue distribution, major protein of plasma HDL, also found in chylomicrons.

It localises to the secreted. Participates in the reverse transport of cholesterol from tissues to the liver for excretion by promoting cholesterol efflux from tissues and by acting as a cofactor for the lecithin cholesterol acyltransferase (LCAT). This is Apolipoprotein A-I (APOA1) from Anas platyrhynchos (Mallard).